The chain runs to 118 residues: Large ribosomal subunit protein uL18 (118 aa).

This sequence belongs to the universal ribosomal protein uL18 family. As to quaternary structure, part of the 50S ribosomal subunit; part of the 5S rRNA/L5/L18/L25 subcomplex. Contacts the 5S and 23S rRNAs.

Functionally, this is one of the proteins that bind and probably mediate the attachment of the 5S RNA into the large ribosomal subunit, where it forms part of the central protuberance. The chain is Large ribosomal subunit protein uL18 from Mycoplasmopsis pulmonis (strain UAB CTIP) (Mycoplasma pulmonis).